Here is a 190-residue protein sequence, read N- to C-terminus: Small ribosomal subunit protein eS7x (190 aa).

Met-1 carries the N-acetylmethionine modification. The stretch at 17 to 50 (TECEEQVAQALFDLENTNQELKSELKDLYINQAV) forms a coiled coil.

This sequence belongs to the eukaryotic ribosomal protein eS7 family.

This chain is Small ribosomal subunit protein eS7x (RPS7C), found in Arabidopsis thaliana (Mouse-ear cress).